A 212-amino-acid polypeptide reads, in one-letter code: ATP-dependent Clp protease proteolytic subunit (212 aa).

The active-site Nucleophile is the S106. The active site involves H131.

It belongs to the peptidase S14 family. Fourteen ClpP subunits assemble into 2 heptameric rings which stack back to back to give a disk-like structure with a central cavity, resembling the structure of eukaryotic proteasomes.

Its subcellular location is the cytoplasm. It carries out the reaction Hydrolysis of proteins to small peptides in the presence of ATP and magnesium. alpha-casein is the usual test substrate. In the absence of ATP, only oligopeptides shorter than five residues are hydrolyzed (such as succinyl-Leu-Tyr-|-NHMec, and Leu-Tyr-Leu-|-Tyr-Trp, in which cleavage of the -Tyr-|-Leu- and -Tyr-|-Trp bonds also occurs).. In terms of biological role, cleaves peptides in various proteins in a process that requires ATP hydrolysis. Has a chymotrypsin-like activity. Plays a major role in the degradation of misfolded proteins. This Rhodopseudomonas palustris (strain ATCC BAA-98 / CGA009) protein is ATP-dependent Clp protease proteolytic subunit.